A 283-amino-acid polypeptide reads, in one-letter code: MKNIRYIDKKDVENLIENKISDDVIIFLSGPTSQKTPLSVLRTKDIIAVNGSAQYLLSNNIVPFIYVLTDVRFLHQRRDDFYKFSQRSRYTIVNVDVYEHASKEDKLYILQNCLVLRSFYRREKGGFIKKIKFNILRQIHKELLISVPLSKKGRLVGFCKDISLGYCSCHTIAFAAIQIAYSLKYARIICSGLDLTGSCSRFYDENKNPMPSELSRDLFKILPFFRFMHDNVKDINIYNLSDDTAISYDVIPFIKLQDISAEESKDMTRKKMQYRTSTDSYAN.

The protein resides in the cytoplasm. It catalyses the reaction an alpha-Kdo-(2-&gt;4)-alpha-Kdo-(2-&gt;6)-lipid IVA + CMP-3-deoxy-beta-D-manno-octulosonate = an alpha-Kdo-(2-&gt;4)-alpha-Kdo-(2-&gt;4)-alpha-Kdo-(2-&gt;6)-lipid IVA + CMP + H(+). The enzyme catalyses alpha-Kdo-(2-&gt;4)-alpha-Kdo-(2-&gt;6)-lipid IVA (E. coli) + CMP-3-deoxy-beta-D-manno-octulosonate = alpha-Kdo-(2-&gt;4)-alpha-Kdo-(2-&gt;4)-alpha-Kdo-(2-&gt;6)-lipid IVA + CMP + H(+). Its pathway is bacterial outer membrane biogenesis; LPS core biosynthesis. It functions in the pathway bacterial outer membrane biogenesis; LOS core biosynthesis. In terms of biological role, involved in the biosynthesis of the core oligosaccharide region of lipopolysaccharide (LPS). Required for the addition of 3-deoxy-D-manno-oct-2-ulosonic acid III (KdoIII) to the KdoII residue of the inner lipopolysaccharide core. May also play a role in a lipooligosaccharide (LOS) biosynthesis pathway. This is Probable 3-deoxy-manno-octulosonic acid transferase from Escherichia coli (strain K12).